The sequence spans 80 residues: UPF0181 protein SG1330 (80 aa).

Residues 58–80 (TEVLETPAARAETDPYDSNPDDD) form a disordered region.

Belongs to the UPF0181 family.

In Sodalis glossinidius (strain morsitans), this protein is UPF0181 protein SG1330.